The primary structure comprises 320 residues: Olfactory receptor 2T12 (320 aa).

Residues 1–23 lie on the Extracellular side of the membrane; the sequence is MEMRNTTPDFILLGLFNHTRAHQ. N17 is a glycosylation site (N-linked (GlcNAc...) asparagine). The helical transmembrane segment at 24-47 threads the bilayer; the sequence is VLFMMLLATVLTSLFSNALMILLI. The Cytoplasmic portion of the chain corresponds to 48 to 55; the sequence is HWDHRLHR. Residues 56 to 77 form a helical membrane-spanning segment; the sequence is PMYFLLSQLSLMDMMLVSTTVP. Over 78 to 98 the chain is Extracellular; it reads KMAADYLTGNKAISRAGCGVQ. Cysteines 95 and 187 form a disulfide. Residues 99–118 form a helical membrane-spanning segment; that stretch reads IFFLPTLGGGECFLLAAMAY. Residues 119-137 are Cytoplasmic-facing; that stretch reads DRYAAVCHPLRYPTLMSWQ. Residues 138–156 form a helical membrane-spanning segment; the sequence is LCLRMTMSSWLLGAADGLL. The Extracellular segment spans residues 157 to 193; the sequence is QAVATLSFPYCGAHEIDHFFCEAPVLVRLACADTSVF. Residues 194–217 form a helical membrane-spanning segment; sequence ENAMYICCVLMLLVPFSLILSSYG. Topologically, residues 218–234 are cytoplasmic; sequence LILAAVLLMRSTEARKK. A helical membrane pass occupies residues 235–257; it reads AFATCSSHVAVVGLFYGAGIFTY. Over 258–270 the chain is Extracellular; sequence MRPKSHRSTNHDK. Residues 271 to 290 traverse the membrane as a helical segment; it reads VVSAFYTMFTPLLNPLIYSV. Over 291-320 the chain is Cytoplasmic; sequence RNSEVKEALKRWLGTCVNLKHQQNEAHRSR.

The protein belongs to the G-protein coupled receptor 1 family.

Its subcellular location is the cell membrane. In terms of biological role, odorant receptor. The chain is Olfactory receptor 2T12 (OR2T12) from Homo sapiens (Human).